The chain runs to 314 residues: Transcriptional regulatory protein GlnL (314 aa).

The Response regulatory domain maps to 2 to 118 (RFFIADDDRA…EIVTVLQKVK (117 aa)). Residue D54 is modified to 4-aspartylphosphate.

Post-translationally, phosphorylated by GlnK.

It localises to the cytoplasm. Functionally, member of the two-component regulatory system GlnL/GlnK that positively regulates the expression of the glsA-glnT operon in response to glutamine. GlnL binds the promoter region of glsA-glnT in vitro. The protein is Transcriptional regulatory protein GlnL (glnL) of Bacillus subtilis (strain 168).